An 87-amino-acid polypeptide reads, in one-letter code: Omega-lycotoxin-Am1c (87 aa).

Positions 1-17 (MKLSIFFVLFFIAIAYC) are cleaved as a signal peptide. The propeptide occupies 18-40 (QPEFLDDEEDEVEETLPVAEEGR). Cystine bridges form between C44/C59, C51/C64, C58/C84, and C66/C82.

It belongs to the neurotoxin omega-lctx family. In terms of tissue distribution, expressed by the venom gland.

It is found in the secreted. Its function is as follows. Modulates Cav2.1/CACNA1A voltage-gated calcium channels (P/Q-type currents) in rat cerebellar Purkinje cells and hippocampal CA1-CA3 neurons. At saturating concentrations (&gt;10 nM) decelerates activation kinetics and slightly increases peak amplitude without affecting deactivation kinetics. In vivo, does not cause death when intravenously injected into mice. In rat models, through its activity on Cav2.1/CACNA1A, has an ameliorative effect on memory defects provoked by hyperstimulation of N-methyl-D-aspartate receptors (NMDARs) in the hippocampus. In Alopecosa marikovskyi (Wolf spider), this protein is Omega-lycotoxin-Am1c.